The sequence spans 99 residues: Large ribosomal subunit protein uL23 (99 aa).

The protein belongs to the universal ribosomal protein uL23 family. In terms of assembly, part of the 50S ribosomal subunit. Contacts protein L29, and trigger factor when it is bound to the ribosome.

One of the early assembly proteins it binds 23S rRNA. One of the proteins that surrounds the polypeptide exit tunnel on the outside of the ribosome. Forms the main docking site for trigger factor binding to the ribosome. This Pseudomonas fluorescens (strain SBW25) protein is Large ribosomal subunit protein uL23.